A 129-amino-acid chain; its full sequence is Small ribosomal subunit protein uS11 (129 aa).

It belongs to the universal ribosomal protein uS11 family. In terms of assembly, part of the 30S ribosomal subunit. Interacts with proteins S7 and S18. Binds to IF-3.

Located on the platform of the 30S subunit, it bridges several disparate RNA helices of the 16S rRNA. Forms part of the Shine-Dalgarno cleft in the 70S ribosome. The chain is Small ribosomal subunit protein uS11 from Carboxydothermus hydrogenoformans (strain ATCC BAA-161 / DSM 6008 / Z-2901).